The sequence spans 33 residues: Dermonecrotic toxin LiSicTox-alphaI-1 (33 aa).

Glu-32 provides a ligand contact to Mg(2+).

This sequence belongs to the arthropod phospholipase D family. Class II subfamily. Mg(2+) serves as cofactor. Contains 2 disulfide bonds. Expressed by the venom gland.

The protein resides in the secreted. The catalysed reaction is an N-(acyl)-sphingosylphosphocholine = an N-(acyl)-sphingosyl-1,3-cyclic phosphate + choline. It catalyses the reaction an N-(acyl)-sphingosylphosphoethanolamine = an N-(acyl)-sphingosyl-1,3-cyclic phosphate + ethanolamine. The enzyme catalyses a 1-acyl-sn-glycero-3-phosphocholine = a 1-acyl-sn-glycero-2,3-cyclic phosphate + choline. It carries out the reaction a 1-acyl-sn-glycero-3-phosphoethanolamine = a 1-acyl-sn-glycero-2,3-cyclic phosphate + ethanolamine. Its function is as follows. Dermonecrotic toxins cleave the phosphodiester linkage between the phosphate and headgroup of certain phospholipids (sphingolipid and lysolipid substrates), forming an alcohol (often choline) and a cyclic phosphate. This toxin acts on sphingomyelin (SM). It may also act on ceramide phosphoethanolamine (CPE), lysophosphatidylcholine (LPC) and lysophosphatidylethanolamine (LPE), but not on lysophosphatidylserine (LPS), and lysophosphatidylglycerol (LPG). It acts by transphosphatidylation, releasing exclusively cyclic phosphate products as second products. In vivo, intradermal injection induces dermonecrosis. Induces hemolysis, increased vascular permeability, edema, inflammatory response, and platelet aggregation. This chain is Dermonecrotic toxin LiSicTox-alphaI-1, found in Loxosceles intermedia (Brown spider).